Consider the following 245-residue polypeptide: 1-(5-phosphoribosyl)-5-[(5-phosphoribosylamino)methylideneamino] imidazole-4-carboxamide isomerase (245 aa).

D7 functions as the Proton acceptor in the catalytic mechanism. The active-site Proton donor is the D129.

This sequence belongs to the HisA/HisF family.

It localises to the cytoplasm. It catalyses the reaction 1-(5-phospho-beta-D-ribosyl)-5-[(5-phospho-beta-D-ribosylamino)methylideneamino]imidazole-4-carboxamide = 5-[(5-phospho-1-deoxy-D-ribulos-1-ylimino)methylamino]-1-(5-phospho-beta-D-ribosyl)imidazole-4-carboxamide. It functions in the pathway amino-acid biosynthesis; L-histidine biosynthesis; L-histidine from 5-phospho-alpha-D-ribose 1-diphosphate: step 4/9. The polypeptide is 1-(5-phosphoribosyl)-5-[(5-phosphoribosylamino)methylideneamino] imidazole-4-carboxamide isomerase (Escherichia coli O9:H4 (strain HS)).